Consider the following 150-residue polypeptide: Protein Smg homolog (150 aa).

Belongs to the Smg family.

This chain is Protein Smg homolog, found in Leptothrix cholodnii (strain ATCC 51168 / LMG 8142 / SP-6) (Leptothrix discophora (strain SP-6)).